Consider the following 100-residue polypeptide: Urease subunit gamma (100 aa).

This sequence belongs to the urease gamma subunit family. As to quaternary structure, heterotrimer of UreA (gamma), UreB (beta) and UreC (alpha) subunits. Three heterotrimers associate to form the active enzyme.

It localises to the cytoplasm. It catalyses the reaction urea + 2 H2O + H(+) = hydrogencarbonate + 2 NH4(+). It participates in nitrogen metabolism; urea degradation; CO(2) and NH(3) from urea (urease route): step 1/1. The chain is Urease subunit gamma from Escherichia coli.